The primary structure comprises 132 residues: Small ribosomal subunit protein uS11 (132 aa).

Belongs to the universal ribosomal protein uS11 family. In terms of assembly, part of the 30S ribosomal subunit. Interacts with proteins S7 and S18. Binds to IF-3.

Its function is as follows. Located on the platform of the 30S subunit, it bridges several disparate RNA helices of the 16S rRNA. Forms part of the Shine-Dalgarno cleft in the 70S ribosome. This is Small ribosomal subunit protein uS11 from Chlamydia abortus (strain DSM 27085 / S26/3) (Chlamydophila abortus).